The primary structure comprises 39 residues: Photosystem II reaction center protein Y (39 aa).

A helical transmembrane segment spans residues 4–22 (TLVVFAPIIAALAWVIFNI).

Belongs to the PsbY family. PSII is composed of 1 copy each of membrane proteins PsbA, PsbB, PsbC, PsbD, PsbE, PsbF, PsbH, PsbI, PsbJ, PsbK, PsbL, PsbM, PsbT, PsbX, PsbY, Psb30/Ycf12, peripheral proteins PsbO, CyanoQ (PsbQ), PsbU, PsbV and a large number of cofactors. It forms dimeric complexes.

It localises to the cellular thylakoid membrane. In terms of biological role, loosely associated component of the core of photosystem II (PSII), it is not always seen in crystals. PSII is a light-driven water plastoquinone oxidoreductase, using light energy to abstract electrons from H(2)O, generating a proton gradient subsequently used for ATP formation. The polypeptide is Photosystem II reaction center protein Y (Prochlorococcus marinus (strain MIT 9515)).